The primary structure comprises 283 residues: Arsenite methyltransferase (283 aa).

Belongs to the methyltransferase superfamily. Arsenite methyltransferase family.

The enzyme catalyses arsenic triglutathione + [thioredoxin]-dithiol + S-adenosyl-L-methionine + 2 H2O = methylarsonous acid + [thioredoxin]-disulfide + 3 glutathione + S-adenosyl-L-homocysteine + H(+). It catalyses the reaction arsenic triglutathione + 2 [thioredoxin]-dithiol + 2 S-adenosyl-L-methionine + H2O = dimethylarsinous acid + 2 [thioredoxin]-disulfide + 3 glutathione + 2 S-adenosyl-L-homocysteine + 2 H(+). It carries out the reaction arsenic triglutathione + 3 [thioredoxin]-dithiol + 3 S-adenosyl-L-methionine = trimethylarsine + 3 [thioredoxin]-disulfide + 3 glutathione + 3 S-adenosyl-L-homocysteine + 3 H(+). Functionally, catalyzes the transfer of a methyl group from AdoMet to arsenite, producing methylated arsenicals. Involved in the conversion of As(III) to a number of di- and trimethylated species, with trimethylarsine as the end product. Reduces the arsenic toxicity in the cell and may contribute to the global arsenic cycling. This Rhodopseudomonas palustris (strain ATCC BAA-98 / CGA009) protein is Arsenite methyltransferase.